A 284-amino-acid polypeptide reads, in one-letter code: UPF0294 protein VV2535 (284 aa).

The protein belongs to the UPF0294 family.

The protein resides in the cytoplasm. This chain is UPF0294 protein VV2535, found in Vibrio vulnificus (strain YJ016).